Here is a 387-residue protein sequence, read N- to C-terminus: Protein disulfide isomerase pTAC5, chloroplastic (387 aa).

A chloroplast-targeting transit peptide spans 1–40 (MASSSLPLSLPFPLRSLTSTTRSLPFQCSPLFFSIPSSIV). Coiled coils occupy residues 72–106 (EQRW…LGNS) and 143–163 (REQI…AEEK). The CR-type zinc finger occupies 318–387 (PVDRSESTNT…CDVCDGKKNL (70 aa)).

As to quaternary structure, interacts with HSP21; the formed complex associates with the plastid-encoded RNA polymerase (PEP) complex not only during transcription initiation, but also during elongation and termination, and with a stronger efficiency in illuminated chloroplasts. Binds to promoter regions of PEP-dependent genes, especially after a heat stress. Interacts with FLN2.

The protein localises to the plastid. Its subcellular location is the chloroplast stroma. It localises to the chloroplast nucleoid. It catalyses the reaction Catalyzes the rearrangement of -S-S- bonds in proteins.. In terms of biological role, exhibits zinc-dependent disulfide isomerase activity. Required for seedling and chloroplast development under heat stress, probably by maintaining plastid-encoded RNA polymerase (PEP)-dependent transcription. The chain is Protein disulfide isomerase pTAC5, chloroplastic from Arabidopsis thaliana (Mouse-ear cress).